The primary structure comprises 108 residues: DNA-binding protein HBbu (108 aa).

This sequence belongs to the bacterial histone-like protein family.

Its function is as follows. Histone-like DNA-binding protein which is capable of wrapping DNA to stabilize it, and thus to prevent its denaturation under extreme environmental conditions. The sequence is that of DNA-binding protein HBbu (hbb) from Borrelia garinii subsp. bavariensis (strain ATCC BAA-2496 / DSM 23469 / PBi) (Borreliella bavariensis).